The primary structure comprises 342 residues: Ferredoxin--NADP reductase (342 aa).

FAD is bound by residues Cys-17, Asp-36, Gln-44, Tyr-49, Val-89, Phe-124, Asp-289, and Thr-330.

It belongs to the ferredoxin--NADP reductase type 2 family. Homodimer. FAD serves as cofactor.

The catalysed reaction is 2 reduced [2Fe-2S]-[ferredoxin] + NADP(+) + H(+) = 2 oxidized [2Fe-2S]-[ferredoxin] + NADPH. The chain is Ferredoxin--NADP reductase from Bradyrhizobium sp. (strain ORS 278).